A 151-amino-acid polypeptide reads, in one-letter code: Large ribosomal subunit protein uL13 (151 aa).

Belongs to the universal ribosomal protein uL13 family. In terms of assembly, part of the 50S ribosomal subunit.

This protein is one of the early assembly proteins of the 50S ribosomal subunit, although it is not seen to bind rRNA by itself. It is important during the early stages of 50S assembly. This chain is Large ribosomal subunit protein uL13, found in Acaryochloris marina (strain MBIC 11017).